A 492-amino-acid polypeptide reads, in one-letter code: Endoglucanase 15 (492 aa).

A signal peptide spans Met1 to Ala30. Asp86 acts as the Nucleophile in catalysis. Active-site residues include His414, Asp466, and Glu475.

Belongs to the glycosyl hydrolase 9 (cellulase E) family.

The protein resides in the secreted. The catalysed reaction is Endohydrolysis of (1-&gt;4)-beta-D-glucosidic linkages in cellulose, lichenin and cereal beta-D-glucans.. The protein is Endoglucanase 15 of Arabidopsis thaliana (Mouse-ear cress).